We begin with the raw amino-acid sequence, 376 residues long: Probable transcription factor At1g61730 (376 aa).

Residues 1 to 150 (MTKKLNPLED…RVKKDEESVK (150 aa)) form a disordered region. Positions 17–40 (SDEDDVETSEAGEASDDSSSSEED) are enriched in acidic residues. Serine 49 carries the post-translational modification Phosphoserine. Positions 49-72 (SPSATTAAAPPAKSTAVSTAADSD) are enriched in low complexity. The segment covering 73-83 (SGSETETDSDS) has biased composition (acidic residues). Residues 87–103 (NPPNSGSGKTIALNTVN) show a composition bias toward polar residues.

The protein belongs to the GeBP family. As to quaternary structure, interacts with DEK3.

The chain is Probable transcription factor At1g61730 from Arabidopsis thaliana (Mouse-ear cress).